A 282-amino-acid chain; its full sequence is 2-dehydro-3-deoxyphosphooctonate aldolase (282 aa).

The protein belongs to the KdsA family.

Its subcellular location is the cytoplasm. It catalyses the reaction D-arabinose 5-phosphate + phosphoenolpyruvate + H2O = 3-deoxy-alpha-D-manno-2-octulosonate-8-phosphate + phosphate. The protein operates within carbohydrate biosynthesis; 3-deoxy-D-manno-octulosonate biosynthesis; 3-deoxy-D-manno-octulosonate from D-ribulose 5-phosphate: step 2/3. It participates in bacterial outer membrane biogenesis; lipopolysaccharide biosynthesis. This is 2-dehydro-3-deoxyphosphooctonate aldolase from Shewanella baltica (strain OS223).